A 255-amino-acid polypeptide reads, in one-letter code: S-adenosyl-L-methionine-dependent uroporphyrinogen III methyltransferase (255 aa).

S-adenosyl-L-homocysteine contacts are provided by residues Pro15, 91-93, 121-122, Met175, and Ala232; these read GGD and TS.

Belongs to the precorrin methyltransferase family. As to quaternary structure, homodimer.

The catalysed reaction is uroporphyrinogen III + 2 S-adenosyl-L-methionine = precorrin-2 + 2 S-adenosyl-L-homocysteine + H(+). Its pathway is porphyrin-containing compound metabolism; siroheme biosynthesis; precorrin-2 from uroporphyrinogen III: step 1/1. Involved in the archaeal biosynthesis of heme. Catalyzes the methylation of carbons 2 and 7 of uroporphyrinogen-III (UROGEN) to yield precorrin-2. It does not catalyze the overmethylation of precorrin-2 to trimethylpyrrocorphin. This chain is S-adenosyl-L-methionine-dependent uroporphyrinogen III methyltransferase, found in Methanosarcina barkeri (strain Fusaro / DSM 804).